The following is a 248-amino-acid chain: 5'-nucleotidase SurE (248 aa).

A divalent metal cation contacts are provided by aspartate 8, aspartate 9, serine 39, and asparagine 91.

Belongs to the SurE nucleotidase family. It depends on a divalent metal cation as a cofactor.

It localises to the cytoplasm. It catalyses the reaction a ribonucleoside 5'-phosphate + H2O = a ribonucleoside + phosphate. In terms of biological role, nucleotidase that shows phosphatase activity on nucleoside 5'-monophosphates. In Geotalea uraniireducens (strain Rf4) (Geobacter uraniireducens), this protein is 5'-nucleotidase SurE.